Here is a 496-residue protein sequence, read N- to C-terminus: Probable CtpA-like serine protease (496 aa).

The span at Met1 to Glu16 shows a compositional bias: basic and acidic residues. Residues Met1–Asn27 form a disordered region. Residues Asn17–Asn27 are compositionally biased toward polar residues. Residues Phe39–Ile59 traverse the membrane as a helical segment. Residues Thr124 to Gly206 form the PDZ domain. Active-site charge relay system residues include Ser329, Asp340, and Lys354.

The protein belongs to the peptidase S41A family.

The protein resides in the cell membrane. This is Probable CtpA-like serine protease from Staphylococcus aureus (strain MRSA252).